Reading from the N-terminus, the 438-residue chain is High-affinity gluconate transporter (438 aa).

The next 13 membrane-spanning stretches (helical) occupy residues 2-22 (PLVI…RFKM), 23-43 (NGFI…GMPL), 52-72 (AGVG…AMLG), 108-128 (VGFA…VFTI), 134-154 (IPLL…HGFL), 174-194 (TLLY…PVYA), 222-242 (FGVS…RAIA), 258-278 (FLGD…FTFG), 292-312 (LVSS…GGAF), 327-347 (SMMH…AAVL), 349-369 (IALG…APLI), 370-390 (ATTG…SVIF), and 418-438 (MLET…NMVI).

This sequence belongs to the GntP permease family.

It is found in the cell inner membrane. It participates in carbohydrate acid metabolism; D-gluconate degradation. In terms of biological role, part of the gluconate utilization system Gnt-I; high-affinity intake of gluconate. This Escherichia coli (strain K12) protein is High-affinity gluconate transporter (gntT).